The chain runs to 428 residues: Dihydroorotase (428 aa).

Residues histidine 59 and histidine 61 each coordinate Zn(2+). Residues 61-63 and asparagine 93 contribute to the substrate site; that span reads HLR. Zn(2+)-binding residues include aspartate 151, histidine 178, and histidine 231. Position 277 (asparagine 277) interacts with substrate. A Zn(2+)-binding site is contributed by aspartate 304. The active site involves aspartate 304. Residues histidine 308 and 322-323 each bind substrate; that span reads FG.

The protein belongs to the metallo-dependent hydrolases superfamily. DHOase family. Class I DHOase subfamily. Zn(2+) is required as a cofactor.

It catalyses the reaction (S)-dihydroorotate + H2O = N-carbamoyl-L-aspartate + H(+). Its pathway is pyrimidine metabolism; UMP biosynthesis via de novo pathway; (S)-dihydroorotate from bicarbonate: step 3/3. Its function is as follows. Catalyzes the reversible cyclization of carbamoyl aspartate to dihydroorotate. The polypeptide is Dihydroorotase (Bacillus cereus (strain G9842)).